A 225-amino-acid polypeptide reads, in one-letter code: Urease subunit alpha (225 aa).

The segment at 1 to 102 (MRLTPKELDK…LVTIHNPIED (102 aa)) is urease gamma. The tract at residues 103 to 225 (NGKLTPGEYI…ANAAQKHFIH (123 aa)) is urease beta.

In the N-terminal section; belongs to the urease gamma subunit family. The protein in the C-terminal section; belongs to the urease beta subunit family. Heterohexamer of 3 UreA (alpha) and 3 UreB (beta) subunits.

The protein resides in the cytoplasm. The catalysed reaction is urea + 2 H2O + H(+) = hydrogencarbonate + 2 NH4(+). Its pathway is nitrogen metabolism; urea degradation; CO(2) and NH(3) from urea (urease route): step 1/1. This is Urease subunit alpha from Helicobacter hepaticus (strain ATCC 51449 / 3B1).